The sequence spans 108 residues: Large ribosomal subunit protein uL22 (108 aa).

The protein belongs to the universal ribosomal protein uL22 family. Part of the 50S ribosomal subunit.

Its function is as follows. This protein binds specifically to 23S rRNA; its binding is stimulated by other ribosomal proteins, e.g. L4, L17, and L20. It is important during the early stages of 50S assembly. It makes multiple contacts with different domains of the 23S rRNA in the assembled 50S subunit and ribosome. In terms of biological role, the globular domain of the protein is located near the polypeptide exit tunnel on the outside of the subunit, while an extended beta-hairpin is found that lines the wall of the exit tunnel in the center of the 70S ribosome. The protein is Large ribosomal subunit protein uL22 of Desulfatibacillum aliphaticivorans.